The primary structure comprises 690 residues: Protein arginine N-methyltransferase 7 (690 aa).

SAM-dependent MTase PRMT-type domains are found at residues 5-355 and 364-690; these read FQDS…FSLW and KEPL…EEEQ.

Belongs to the class I-like SAM-binding methyltransferase superfamily. Protein arginine N-methyltransferase family. PRMT7 subfamily.

Its function is as follows. Essential arginine methyltransferase that can both catalyze the formation of omega-N monomethylarginine (MMA) and symmetrical dimethylarginine (sDMA). Specifically mediates the symmetrical dimethylation of arginine residues in the small nuclear ribonucleoproteins SmD1 and SmD3. The chain is Protein arginine N-methyltransferase 7 (Art7) from Anopheles gambiae (African malaria mosquito).